The primary structure comprises 398 residues: uncharacterized protein (398 aa).

At K212 the chain carries N6-(pyridoxal phosphate)lysine.

This sequence belongs to the trans-sulfuration enzymes family. Requires pyridoxal 5'-phosphate as cofactor.

This is an uncharacterized protein from Schizosaccharomyces pombe (strain 972 / ATCC 24843) (Fission yeast).